The sequence spans 553 residues: MSDIALTVSVLALVAVVGLWIGNIKVRGVGFGIGGVLFGGIIVGHFVDQAGMTLSGDMLHFIQEFGLILFVYTIGIQVGPGFFASLRVSGLRLNLFAVLIVIMGGLVTAILHKIFAIPLPVVLGIFSGAVTNTPALGAGQQILRDLGTPVDLVDQMGMSYAMAYPFGICGILLTMWLMRLIFRVNVEAEAQKHESSLANGHSLIQTMNIRVENPNLNNMAIQDVPILNSDKIICSRLKRDDTLMVPSPGTIIQAGDLLHLVGQSTDLHNAQLVIGKEVDTSLSTRGTDLRVERVVVTNEKVLGKRIRDLHFKERYDVVISRLNRAGVELVATSDASLQFGDILNLVGRPASIDAVANVVGNAQQKLQQVQMLPVFIGIGLGVLLGSIPLFVPGFPVALKLGLAGGPLIIALILGRIGSIGKLYWFMPPSANLALRELGIVLFLAVVGLKSGGNFVNTLTQGEGLSWIGYGIFITAIPLITVGLLARIFAKMNYLTLCGMLAGSMTDPPALAFANNLHATSGAAALSYATVYPLVMFLRIITPQLLAVIFWGIG.

5 helical membrane passes run 4-24 (IALT…IGNI), 28-48 (GVGF…HFVD), 65-85 (FGLI…FFAS), 95-115 (LFAV…HKIF), and 158-178 (MSYA…MWLM). RCK C-terminal domains follow at residues 192–276 (KHES…VIGK) and 279–361 (DTSL…VVGN). The next 5 helical transmembrane spans lie at 371 to 391 (MLPV…PLFV), 403 to 425 (AGGP…LYWF), 437 to 457 (LGIV…FVNT), 464 to 484 (LSWI…VGLL), and 533 to 553 (LVMF…WGIG).

It belongs to the AAE transporter (TC 2.A.81) family. YidE subfamily.

The protein localises to the cell membrane. The polypeptide is Putative transport protein YidE (Salmonella arizonae (strain ATCC BAA-731 / CDC346-86 / RSK2980)).